Reading from the N-terminus, the 194-residue chain is tRNA (pseudouridine(54)-N(1))-methyltransferase (194 aa).

An S-adenosyl-L-methionine-binding site is contributed by Leu-125.

This sequence belongs to the methyltransferase superfamily. TrmY family. In terms of assembly, homodimer.

It localises to the cytoplasm. The catalysed reaction is pseudouridine(54) in tRNA + S-adenosyl-L-methionine = N(1)-methylpseudouridine(54) in tRNA + S-adenosyl-L-homocysteine + H(+). Functionally, specifically catalyzes the N1-methylation of pseudouridine at position 54 (Psi54) in tRNAs. In Methanospirillum hungatei JF-1 (strain ATCC 27890 / DSM 864 / NBRC 100397 / JF-1), this protein is tRNA (pseudouridine(54)-N(1))-methyltransferase.